We begin with the raw amino-acid sequence, 960 residues long: Dynamin-like GTPase OPA1, mitochondrial (960 aa).

The transit peptide at 1–87 directs the protein to the mitochondrion; sequence MWRLRRAAVA…IKYGYQPRRN (87 aa). Topologically, residues 88–96 are mitochondrial matrix; that stretch reads FWPARLATR. Residues 97 to 113 traverse the membrane as a helical segment; the sequence is LLKLRYLILGSAVGGGY. Residues 114–770 lie on the Mitochondrial intermembrane side of the membrane; sequence TAKKTFDQWK…NAIENMVGPD (657 aa). 2 consecutive short sequence motifs (LQQQIQ motif) follow at residues 181–186 and 217–222; these read DFFTSG and QLQEEL. Positions 210 to 254 form a coiled coil; the sequence is SDKEKIDQLQEELLHTQLKYQRILERLEKENKELRKLVLQKDDKG. Lysine 228 bears the N6-acetyllysine mark. Residues 235-240 carry the LQQQIQ motif motif; sequence RLEKEN. Residues 285–561 form the Dynamin-type G domain; it reads QDHLPRVVVV…FWKMVRESVE (277 aa). Residues 295–302 are G1 motif; it reads GDQSAGKT. The GTP site is built by serine 298, glycine 300, lysine 301, threonine 302, serine 303, and glycine 317. Threonine 302 serves as a coordination point for Mg(2+). Positions 321–324 are G2 motif; the sequence is MMTR. Positions 323 and 398 each coordinate Mg(2+). The tract at residues 398 to 401 is G3 motif; the sequence is DLPG. The interval 467 to 470 is G4 motif; it reads TKVD. The GTP site is built by lysine 468, aspartate 470, threonine 503, glycine 506, and asparagine 507. The segment at 501 to 504 is G5 motif; it reads VVTG. 2 stalk region regions span residues 589–836 and 874–928; these read DRNE…IKDT and CNDV…IKLL. A paddle region region spans residues 736–856; that stretch reads SDKQQWDAAI…KTALNHCNLC (121 aa). The stretch at 771 to 781 is an intramembrane region; it reads WKKRWLYWKNR. At 782–960 the chain is on the mitochondrial intermembrane side; that stretch reads TQEQCVHNET…AFIEALHQEK (179 aa). Cysteine 856 and cysteine 874 are disulfide-bonded. Positions 895–960 form a coiled coil; the sequence is RQQLTNTEVR…AFIEALHQEK (66 aa).

Belongs to the TRAFAC class dynamin-like GTPase superfamily. Dynamin/Fzo/YdjA family. As to quaternary structure, oligomeric complex consisting of membrane-bound and soluble forms of OPA1. Interacts with RCC1L; RCC1L acts as a guanine nucleotide exchange factor (GEF) for OPA1 by exchanging bound GDP for free GTP. Interacts with CHCHD3 and IMMT; these interactions occur preferentially with soluble OPA1 forms. Interacts with PRELID1. In terms of processing, cleaved by OMA1 or YME1L downstream of the transmembrane region in response to different signals to generate soluble forms. Cleaved by OMA1 at position S1 following stress conditions, generating the short soluble form (Dynamin-like GTPase OPA1, short form; S-OPA1). AFG3L2 is involved in the regulation of OMA1-dependent processing of OPA1. PARL-dependent proteolytic processing releases an antiapoptotic soluble form not required for mitochondrial fusion. Cleavage at position S2 by YME1L is required to mediate oxidative phosphorylation (OXPHOS)-induced mitochondrial fusion. Cleavage occurs in the sequence motif Leu-Gln-Gln-Gln-Ile-Gln (LQQQIQ). Post-translationally, cleavage at position S2 by YME1L is required to mediate oxidative phosphorylation (OXPHOS)-induced mitochondrial fusion. Cleavage occurs in the sequence motif Leu-Gln-Gln-Gln-Ile-Gln (LQQQIQ). Cleavage at position S3 by YME1L is required for membrane tubulation. In terms of processing, cleavage at position S3 by YME1L is required for membrane tubulation. In terms of tissue distribution, highly expressed in retina. Also expressed in brain, testis, heart and skeletal muscle. Low levels of all isoforms expressed in a variety of tissues. As to expression, expressed in retina, skeletal muscle, heart, lung, ovary, colon, thyroid gland, leukocytes and fetal brain. Low levels of all isoforms expressed in a variety of tissues. Isoform 2 expressed in colon, liver, kidney, thyroid gland and leukocytes.

Its subcellular location is the mitochondrion inner membrane. It localises to the mitochondrion intermembrane space. It carries out the reaction GTP + H2O = GDP + phosphate + H(+). Activated by guanine nucleotide exchange factor RCC1L. Functionally, dynamin-related GTPase that is essential for normal mitochondrial morphology by mediating fusion of the mitochondrial inner membranes, regulating cristae morphology and maintaining respiratory chain function. Exists in two forms: the transmembrane, long form (Dynamin-like GTPase OPA1, long form; L-OPA1), which is tethered to the inner mitochondrial membrane, and the short soluble form (Dynamin-like GTPase OPA1, short form; S-OPA1), which results from proteolytic cleavage and localizes in the intermembrane space. Both forms (L-OPA1 and S-OPA1) cooperate to catalyze the fusion of the mitochondrial inner membrane. The equilibrium between L-OPA1 and S-OPA1 is essential: excess levels of S-OPA1, produced by cleavage by OMA1 following loss of mitochondrial membrane potential, lead to an impaired equilibrium between L-OPA1 and S-OPA1, inhibiting mitochondrial fusion. The balance between L-OPA1 and S-OPA1 also influences cristae shape and morphology. Involved in remodeling cristae and the release of cytochrome c during apoptosis. Proteolytic processing by PARL in response to intrinsic apoptotic signals may lead to disassembly of OPA1 oligomers and release of the caspase activator cytochrome C (CYCS) into the mitochondrial intermembrane space. Acts as a regulator of T-helper Th17 cells, which are characterized by cells with fused mitochondria with tight cristae, by mediating mitochondrial membrane remodeling: OPA1 is required for interleukin-17 (IL-17) production. Its role in mitochondrial morphology is required for mitochondrial genome maintenance. Constitutes the transmembrane long form (L-OPA1) that plays a central role in mitochondrial inner membrane fusion and cristae morphology. L-OPA1 and the soluble short form (S-OPA1) form higher-order helical assemblies that coordinate the fusion of mitochondrial inner membranes. Inner membrane-anchored L-OPA1 molecules initiate membrane remodeling by recruiting soluble S-OPA1 to rapidly polymerize into a flexible cylindrical scaffold encaging the mitochondrial inner membrane. Once at the membrane surface, the formation of S-OPA1 helices induce bilayer curvature. OPA1 dimerization through the paddle region, which inserts into cardiolipin-containing membrane, promotes GTP hydrolysis and the helical assembly of a flexible OPA1 lattice on the membrane, which drives membrane curvature and mitochondrial fusion. Plays a role in the maintenance and remodeling of mitochondrial cristae, some invaginations of the mitochondrial inner membrane that provide an increase in the surface area. Probably acts by forming helical filaments at the inside of inner membrane tubes with the shape and dimensions of crista junctions. The equilibrium between L-OPA1 and S-OPA1 influences cristae shape and morphology: increased L-OPA1 levels promote cristae stacking and elongated mitochondria, while increased S-OPA1 levels correlated with irregular cristae packing and round mitochondria shape. Its function is as follows. Constitutes the soluble short form (S-OPA1) generated by cleavage by OMA1, which plays a central role in mitochondrial inner membrane fusion and cristae morphology. The transmembrane long form (L-OPA1) and the S-OPA1 form higher-order helical assemblies that coordinate the fusion of mitochondrial inner membranes. Inner membrane-anchored L-OPA1 molecules initiate membrane remodeling by recruiting soluble S-OPA1 to rapidly polymerize into a flexible cylindrical scaffold encaging the mitochondrial inner membrane. Once at the membrane surface, the formation of S-OPA1 helices induce bilayer curvature. OPA1 dimerization through the paddle region, which inserts into cardiolipin-containing membrane, promotes GTP hydrolysis and the helical assembly of a flexible OPA1 lattice on the membrane, which drives membrane curvature and mitochondrial fusion. Excess levels of S-OPA1 produced by cleavage by OMA1 following stress conditions that induce loss of mitochondrial membrane potential, lead to an impaired equilibrium between L-OPA1 and S-OPA1, thereby inhibiting mitochondrial fusion. Involved in mitochondrial safeguard in response to transient mitochondrial membrane depolarization by mediating flickering: cleavage by OMA1 leads to excess production of S-OPA1, preventing mitochondrial hyperfusion. Plays a role in the maintenance and remodeling of mitochondrial cristae, some invaginations of the mitochondrial inner membrane that provide an increase in the surface area. Probably acts by forming helical filaments at the inside of inner membrane tubes with the shape and dimensions of crista junctions. The equilibrium between L-OPA1 and S-OPA1 influences cristae shape and morphology: increased L-OPA1 levels promote cristae stacking and elongated mitochondria, while increased S-OPA1 levels correlated with irregular cristae packing and round mitochondria shape. In terms of biological role, coexpression of isoform 1 with shorter alternative products is required for optimal activity in promoting mitochondrial fusion. Functionally, isoforms that contain the alternative exon 4b are required for mitochondrial genome maintenance, possibly by anchoring the mitochondrial nucleoids to the inner mitochondrial membrane. This chain is Dynamin-like GTPase OPA1, mitochondrial, found in Homo sapiens (Human).